The chain runs to 325 residues: Forkhead box protein B1 (325 aa).

Positions 12–103 (QKPPYSYISL…GDMFENGSFL (92 aa)) form a DNA-binding region, fork-head. A compositionally biased stretch (low complexity) spans 284 to 309 (LSNSPPSLSPTSSQTATSQSSPATPS). Residues 284 to 325 (LSNSPPSLSPTSSQTATSQSSPATPSETLTSPASALHSVAVH) are disordered.

In terms of tissue distribution, expressed widespread in the early developing ventricular zone of the neural tube and later restricted to areas of the spinal cord, hindbrain, thalamus and hypothalamus. Expressed in epithelial cells of developing and adult mammary glands.

It is found in the nucleus. In terms of biological role, transcription factor expressed by neural progenitor cells in specific regions of the embryonic neuroepithelium. Essential for the mammillary nuclei maintenance. Negatively regulates the proliferation of oligodendrocyte progenitors and promotes oligodendrocyte maturation. Also expressed in mammary glands, plays a role in lactation, controls development of mammary glands and the inferior colliculi of the midbrain in the central nervous system that regulates the milk-ejection reflex. This is Forkhead box protein B1 (Foxb1) from Mus musculus (Mouse).